The following is a 282-amino-acid chain: Bifunctional protein FolD 1 (282 aa).

Residues 167–169 (GRS) and serine 192 contribute to the NADP(+) site.

Belongs to the tetrahydrofolate dehydrogenase/cyclohydrolase family. Homodimer.

It carries out the reaction (6R)-5,10-methylene-5,6,7,8-tetrahydrofolate + NADP(+) = (6R)-5,10-methenyltetrahydrofolate + NADPH. The catalysed reaction is (6R)-5,10-methenyltetrahydrofolate + H2O = (6R)-10-formyltetrahydrofolate + H(+). It functions in the pathway one-carbon metabolism; tetrahydrofolate interconversion. Catalyzes the oxidation of 5,10-methylenetetrahydrofolate to 5,10-methenyltetrahydrofolate and then the hydrolysis of 5,10-methenyltetrahydrofolate to 10-formyltetrahydrofolate. This is Bifunctional protein FolD 1 from Colwellia psychrerythraea (strain 34H / ATCC BAA-681) (Vibrio psychroerythus).